The chain runs to 181 residues: Transcription antitermination protein NusB (181 aa).

The tract at residues 1-36 (MTEDNNKAAGAKPRPARQVRTGLTSTGARKASAKSN) is disordered.

Belongs to the NusB family.

Its function is as follows. Involved in transcription antitermination. Required for transcription of ribosomal RNA (rRNA) genes. Binds specifically to the boxA antiterminator sequence of the ribosomal RNA (rrn) operons. In Variovorax paradoxus (strain S110), this protein is Transcription antitermination protein NusB.